The following is a 227-amino-acid chain: LysM and putative peptidoglycan-binding domain-containing protein 1 (227 aa).

Residues Ser-23 and Ser-33 each carry the phosphoserine modification. The LysM domain occupies 40–84 (LEHQLEPGDTLAGLALKYGVTMEQIKRTNRLYTNDSIFLKKTLYI). Residues 95-157 (NGLDSEEEEN…PSHDLSASDF (63 aa)) are disordered. Residues 98–108 (DSEEEENDGEE) show a composition bias toward acidic residues. Ser-99 is subject to Phosphoserine. Residues 143–152 (QGTSTPSHDL) show a composition bias toward polar residues. Phosphoserine is present on residues Ser-166, Ser-181, Ser-194, and Ser-212. A disordered region spans residues 169–227 (KKAAAQKLRKGESGVPEEDTGLYPSSPRMQQRAVLGPVPLTRTSRTQTLRDQEDEIFKL). A compositionally biased stretch (basic and acidic residues) spans 216–227 (TLRDQEDEIFKL).

The chain is LysM and putative peptidoglycan-binding domain-containing protein 1 (Lysmd1) from Rattus norvegicus (Rat).